A 197-amino-acid polypeptide reads, in one-letter code: Imidazoleglycerol-phosphate dehydratase (197 aa).

This sequence belongs to the imidazoleglycerol-phosphate dehydratase family.

Its subcellular location is the cytoplasm. It carries out the reaction D-erythro-1-(imidazol-4-yl)glycerol 3-phosphate = 3-(imidazol-4-yl)-2-oxopropyl phosphate + H2O. Its pathway is amino-acid biosynthesis; L-histidine biosynthesis; L-histidine from 5-phospho-alpha-D-ribose 1-diphosphate: step 6/9. The protein is Imidazoleglycerol-phosphate dehydratase of Pseudomonas fluorescens (strain Pf0-1).